The sequence spans 162 residues: Caveolin-2 (162 aa).

At 1–86 (MGLETEKADV…FEISKYVMYK (86 aa)) the chain is on the cytoplasmic side. Y19 carries the phosphotyrosine; by SRC modification. A Phosphoserine modification is found at S20. At Y27 the chain carries Phosphotyrosine; by SRC. At S36 the chain carries Phosphoserine. The helical intramembrane region spans 87-107 (FLTVFLAIPLAFAAGILFATL). The Cytoplasmic segment spans residues 108–162 (SCLHIWIIMPFVKTCLMVLPSVQTIWKSVTDVIIAPLCTSVGRSLSSISLQLSHD).

The protein belongs to the caveolin family. In terms of assembly, monomer or homodimer. Interacts with CAV1; the interaction forms a stable heterooligomeric complex that is required for targeting to lipid rafts and for caveolae formation. Tyrosine phosphorylated forms do not form heterooligomers with the Tyr-19-phosphorylated form existing as a monomer or dimer, and the Tyr-27-form as a monomer only. Interacts (tyrosine phosphorylated form) with the SH2 domain-containing proteins, RASA1, NCK1 and SRC. Interacts (tyrosine phosphorylated form) with INSR, the interaction (Tyr-27-phosphorylated form) is increased on insulin stimulation. Interacts (Tyr-19 phosphorylated form) with MAPK1 (phosphorylated form); the interaction, promoted by insulin, leads to nuclear location and MAPK1 activation. Interacts with STAT3; the interaction is increased on insulin-induced tyrosine phosphorylation leading to STAT activation. In terms of processing, phosphorylated on serine and tyrosine residues. Phosphorylation on Ser-36 appears to modulate mitosis in endothelial cells. Phosphorylation on both Tyr-19 and Tyr-27 is required for insulin-induced 'Ser-727' phosphorylation of STAT3 and its activation. Phosphorylation on Tyr-19 is required for insulin-induced phosphorylation of MAPK1 and DNA binding of STAT3. Tyrosine phosphorylation is induced by both EGF and insulin.

The protein localises to the nucleus. It localises to the cytoplasm. It is found in the golgi apparatus membrane. The protein resides in the cell membrane. Its subcellular location is the membrane. The protein localises to the caveola. In terms of biological role, may act as a scaffolding protein within caveolar membranes. Interacts directly with G-protein alpha subunits and can functionally regulate their activity. Acts as an accessory protein in conjunction with CAV1 in targeting to lipid rafts and driving caveolae formation. The Ser-36 phosphorylated form has a role in modulating mitosis in endothelial cells. Positive regulator of cellular mitogenesis of the MAPK signaling pathway. Required for the insulin-stimulated nuclear translocation and activation of MAPK1 and STAT3, and the subsequent regulation of cell cycle progression. In Eulemur macaco macaco (Black lemur), this protein is Caveolin-2 (CAV2).